A 340-amino-acid polypeptide reads, in one-letter code: Mitochondrial calcium uniporter regulator 1 (340 aa).

Residues 1-44 (MDSGSVAAERPRRTPSRQRLPSSGCGVPARPGVSTLPGGRSWLR) are disordered. The Mitochondrial intermembrane portion of the chain corresponds to 1-54 (MDSGSVAAERPRRTPSRQRLPSSGCGVPARPGVSTLPGGRSWLRPRGRAARASP). The helical transmembrane segment at 55–74 (LLFLLLVPSPRLAATATATA) threads the bilayer. Residues 75–316 (PRRTLAERSR…KTMLEAHKLD (242 aa)) are Mitochondrial matrix-facing. Positions 197–291 (ALQQVLSKIA…VSLHAQQDRA (95 aa)) form a coiled coil. An N6-acetyllysine modification is found at lysine 204. The helical transmembrane segment at 317–339 (TIKYLAGSVFTCLTVALGFYRLW) threads the bilayer. A topological domain (mitochondrial intermembrane) is located at residue isoleucine 340.

The protein belongs to the CCDC90 family. As to quaternary structure, interacts (via coiled coil regions) with MCU; the interaction is direct. Interacts with SMDT1/EMRE; the interaction is direct. Interacts with PPIF.

It localises to the mitochondrion inner membrane. In terms of biological role, key regulator of mitochondrial calcium uniporter (MCU) required for calcium entry into mitochondrion. Plays a direct role in uniporter-mediated calcium uptake via a direct interaction with MCU. Probably involved in the assembly of the membrane components of the uniporter complex (uniplex). This chain is Mitochondrial calcium uniporter regulator 1, found in Mus musculus (Mouse).